We begin with the raw amino-acid sequence, 347 residues long: Probable 3-hydroxyisobutyrate dehydrogenase, mitochondrial (347 aa).

The N-terminal 34 residues, 1–34 (MAIRRAQTLLCLSKFKTNFVSGSLHRFSSSSQNS), are a transit peptide targeting the mitochondrion. NAD(+) is bound by residues 38-67 (QNVG…TVHD), 101-102 (LP), and Thr134. Lys219 is a catalytic residue. Position 294 (Lys294) interacts with NAD(+).

This sequence belongs to the HIBADH-related family. 3-hydroxyisobutyrate dehydrogenase subfamily.

It localises to the mitochondrion. The enzyme catalyses 3-hydroxy-2-methylpropanoate + NAD(+) = 2-methyl-3-oxopropanoate + NADH + H(+). It functions in the pathway amino-acid degradation; L-valine degradation. This is Probable 3-hydroxyisobutyrate dehydrogenase, mitochondrial from Arabidopsis thaliana (Mouse-ear cress).